The chain runs to 221 residues: Putative N-acetylmannosamine-6-phosphate 2-epimerase (221 aa).

The protein belongs to the NanE family.

The enzyme catalyses an N-acyl-D-glucosamine 6-phosphate = an N-acyl-D-mannosamine 6-phosphate. The protein operates within amino-sugar metabolism; N-acetylneuraminate degradation; D-fructose 6-phosphate from N-acetylneuraminate: step 3/5. Its function is as follows. Converts N-acetylmannosamine-6-phosphate (ManNAc-6-P) to N-acetylglucosamine-6-phosphate (GlcNAc-6-P). The sequence is that of Putative N-acetylmannosamine-6-phosphate 2-epimerase from Clostridium perfringens (strain ATCC 13124 / DSM 756 / JCM 1290 / NCIMB 6125 / NCTC 8237 / Type A).